Here is a 1187-residue protein sequence, read N- to C-terminus: RNA helicase Mov10l1 (1187 aa).

The tract at residues 273–347 is disordered; sequence RSKSCPGAAA…EPEPGGLIPP (75 aa). Composition is skewed to basic and acidic residues over residues 296-307 and 322-339; these read HHREDKTDEIPE and ACKE…KQEP. A run of 5 repeats spans residues 642–652, 653–663, 664–674, 675–685, and 686–696. The segment at 642–696 is 5 X 11 AA tandem repeats of [TI]-R-N-[DN]-[GS]-Q-[SP]-I-T-[NK]-[IVN]; it reads TRNDSQSITNIIRNDGQSITNVTRNDGQPITKVTRNNSQSITNITRNDGQPITKN. A disordered region spans residues 686 to 727; that stretch reads TRNDGQPITKNKKTVKDQTKHTTEERHVGTTDQPEKASSTAE. Positions 699 to 720 are enriched in basic and acidic residues; it reads TVKDQTKHTTEERHVGTTDQPE. 772–779 serves as a coordination point for ATP; it reads GPPGTGKT. Residues 888 to 891 carry the DEAG box motif; the sequence is DEAG.

The protein belongs to the DNA2/NAM7 helicase family. SDE3 subfamily. In terms of assembly, interacts with PIWIL1. Interacts with PIWIL2. Interacts with PIWIL4. Interacts with HSPA2. Interacts with PLD6. As to expression, isoform 1: Specifically expressed in testis. Isoform 1: In testis, present in pachytene spermatocytes but absent in postmeiotic spermatids (at protein level). Isoform 2: Present in cardiomyocytes (at protein level). Isoform 2: Heart specific. Isoform 3: Heart specific and is specifically expressed in cardiac myocytes.

Its subcellular location is the cytoplasm. It carries out the reaction ATP + H2O = ADP + phosphate + H(+). ATP-dependent RNA helicase required during spermatogenesis to repress transposable elements and prevent their mobilization, which is essential for germline integrity. Acts via the piRNA metabolic process, which mediates the repression of transposable elements during meiosis by forming complexes composed of piRNAs and Piwi proteins and governs the methylation and subsequent repression of transposons. Involved in the primary piRNA metabolic process. Specifically binds to piRNA precursors and promotes the generation of intermediate piRNA processing fragments that are subsequently loaded to Piwi proteins. Acts via its ATP-dependent RNA helicase activity: displays 5'-3' RNA unwinding activity and probably mediates unwinding and funneling of single-stranded piRNA precursor transcripts to the endonuclease that catalyzes the first cleavage step of piRNA processing to generate piRNA intermediate fragments that are subsequently loaded to Piwi proteins. In terms of biological role, may act downstream of MEF2C during heart formation. Acts as a cardiac-specific suppressor of cardiomyocyte hypertrophy and cell cycle progression, suggesting that it may suppress these processes through the regulation of CDKN1A. Such results however require additional evidence. This Mus musculus (Mouse) protein is RNA helicase Mov10l1.